A 91-amino-acid polypeptide reads, in one-letter code: Probable Fe(2+)-trafficking protein (91 aa).

Belongs to the Fe(2+)-trafficking protein family.

Functionally, could be a mediator in iron transactions between iron acquisition and iron-requiring processes, such as synthesis and/or repair of Fe-S clusters in biosynthetic enzymes. The polypeptide is Probable Fe(2+)-trafficking protein (Cupriavidus metallidurans (strain ATCC 43123 / DSM 2839 / NBRC 102507 / CH34) (Ralstonia metallidurans)).